The primary structure comprises 350 residues: Phenylalanine--tRNA ligase alpha subunit (350 aa).

Residue Glu271 coordinates Mg(2+).

Belongs to the class-II aminoacyl-tRNA synthetase family. Phe-tRNA synthetase alpha subunit type 1 subfamily. In terms of assembly, tetramer of two alpha and two beta subunits. Requires Mg(2+) as cofactor.

The protein localises to the cytoplasm. It catalyses the reaction tRNA(Phe) + L-phenylalanine + ATP = L-phenylalanyl-tRNA(Phe) + AMP + diphosphate + H(+). The sequence is that of Phenylalanine--tRNA ligase alpha subunit from Acidovorax ebreus (strain TPSY) (Diaphorobacter sp. (strain TPSY)).